Consider the following 541-residue polypeptide: Chaperonin GroEL 2 (541 aa).

Residues 29-32 (TLGP), 86-90 (DGTTT), glycine 413, 476-478 (NAA), and aspartate 492 contribute to the ATP site.

Belongs to the chaperonin (HSP60) family. Forms a cylinder of 14 subunits composed of two heptameric rings stacked back-to-back. Interacts with the co-chaperonin GroES.

The protein resides in the secreted. It localises to the capsule. Its subcellular location is the cell surface. It is found in the cell wall. It catalyses the reaction ATP + H2O + a folded polypeptide = ADP + phosphate + an unfolded polypeptide.. In terms of biological role, together with its co-chaperonin GroES, plays an essential role in assisting protein folding. The GroEL-GroES system forms a nano-cage that allows encapsulation of the non-native substrate proteins and provides a physical environment optimized to promote and accelerate protein folding. This is Chaperonin GroEL 2 from Mycobacterium leprae (strain TN).